The following is a 131-amino-acid chain: Small ribosomal subunit protein uS12c (131 aa).

Belongs to the universal ribosomal protein uS12 family. As to quaternary structure, part of the 30S ribosomal subunit.

Its subcellular location is the plastid. The protein localises to the chloroplast. Functionally, with S4 and S5 plays an important role in translational accuracy. Located at the interface of the 30S and 50S subunits. The chain is Small ribosomal subunit protein uS12c (rps12) from Stigeoclonium helveticum (Green alga).